A 561-amino-acid chain; its full sequence is Putative transport protein CKO_02260 (561 aa).

Helical transmembrane passes span Leu-8–Gly-28, Leu-32–Gln-52, Phe-66–Phe-86, Met-94–Phe-114, and Asn-158–Ala-178. RCK C-terminal domains are found at residues Arg-200–Asn-288 and Val-292–Phe-373. The next 5 membrane-spanning stretches (helical) occupy residues Leu-383–Phe-403, Phe-406–Leu-426, Phe-447–Gly-467, Met-475–Ala-495, and Ala-540–Leu-560.

The protein belongs to the AAE transporter (TC 2.A.81) family. YbjL subfamily.

It localises to the cell membrane. The sequence is that of Putative transport protein CKO_02260 from Citrobacter koseri (strain ATCC BAA-895 / CDC 4225-83 / SGSC4696).